A 218-amino-acid polypeptide reads, in one-letter code: Small ribosomal subunit protein uS3 (218 aa).

The KH type-2 domain occupies 38–106; it reads IREFISKRLS…RVHINILEIK (69 aa).

The protein belongs to the universal ribosomal protein uS3 family. Part of the 30S ribosomal subunit. Forms a tight complex with proteins S10 and S14.

Functionally, binds the lower part of the 30S subunit head. Binds mRNA in the 70S ribosome, positioning it for translation. The polypeptide is Small ribosomal subunit protein uS3 (Bacillus velezensis (strain DSM 23117 / BGSC 10A6 / LMG 26770 / FZB42) (Bacillus amyloliquefaciens subsp. plantarum)).